Consider the following 209-residue polypeptide: Ribonuclease HII (209 aa).

Positions 20-209 (QLEIGIDEVG…KSFLTKLNLI (190 aa)) constitute an RNase H type-2 domain. The a divalent metal cation site is built by D26, E27, and D122.

The protein belongs to the RNase HII family. Requires Mn(2+) as cofactor. The cofactor is Mg(2+).

It is found in the cytoplasm. It catalyses the reaction Endonucleolytic cleavage to 5'-phosphomonoester.. In terms of biological role, endonuclease that specifically degrades the RNA of RNA-DNA hybrids. In Prochlorococcus marinus (strain MIT 9515), this protein is Ribonuclease HII.